The chain runs to 151 residues: Deoxyuridine 5'-triphosphate nucleotidohydrolase (151 aa).

R28 contacts Mg(2+). Residues 72–74, 86–89, Y92, G97, I99, and R115 each bind dUTP; these read PRS and GVID.

Belongs to the dUTPase family. Requires Mg(2+) as cofactor.

The catalysed reaction is dUTP + H2O = dUMP + diphosphate + H(+). In terms of biological role, this enzyme is involved in nucleotide metabolism: it produces dUMP, the immediate precursor of thymidine nucleotides and it decreases the intracellular concentration of dUTP so that uracil cannot be incorporated into DNA. This is Deoxyuridine 5'-triphosphate nucleotidohydrolase (OPG046) from Monkeypox virus.